A 734-amino-acid chain; its full sequence is DNA replication licensing factor MCM5 (734 aa).

S2 carries the post-translational modification N-acetylserine. Residue S315 is modified to Phosphoserine. The MCM domain maps to 331–537 (VYEVISKSIA…RDVMLAKHVI (207 aa)). R371 is a binding site for ADP. 2 positions are modified to N6-acetyllysine: K392 and K396. S605 is modified (phosphoserine). An N6-acetyllysine modification is found at K696.

The protein belongs to the MCM family. In terms of assembly, component of the MCM2-7 complex. The complex forms a toroidal hexameric ring with the proposed subunit order MCM2-MCM6-MCM4-MCM7-MCM3-MCM5. Component of the CMG helicase complex, a hexameric ring of related MCM2-7 subunits stabilized by CDC45 and the tetrameric GINS complex. Interacts with ANKRD17. Interacts with MCMBP. Interacts with TONSL; the interaction is direct.

It localises to the nucleus. Its subcellular location is the chromosome. It catalyses the reaction ATP + H2O = ADP + phosphate + H(+). Its function is as follows. Acts as a component of the MCM2-7 complex (MCM complex) which is the replicative helicase essential for 'once per cell cycle' DNA replication initiation and elongation in eukaryotic cells. Core component of CDC45-MCM-GINS (CMG) helicase, the molecular machine that unwinds template DNA during replication, and around which the replisome is built. The active ATPase sites in the MCM2-7 ring are formed through the interaction surfaces of two neighboring subunits such that a critical structure of a conserved arginine finger motif is provided in trans relative to the ATP-binding site of the Walker A box of the adjacent subunit. The six ATPase active sites, however, are likely to contribute differentially to the complex helicase activity. The sequence is that of DNA replication licensing factor MCM5 (MCM5) from Homo sapiens (Human).